The sequence spans 415 residues: Fructose-like permease IIC component (415 aa).

The Cytoplasmic segment spans residues 1-46 (MAIKKRSATVVPGASGAAAAVKNLQASKSSFWGELPQHVMSGISRM). The 381-residue stretch at 35–415 (LPQHVMSGIS…RKGKLLIDSL (381 aa)) folds into the PTS EIIC type-2 domain. Residues 47–67 (VPTLIMGGVILAFSQLIAYSW) form a helical membrane-spanning segment. Residues 68–101 (LKIPAEIGIMDALNSGKFSGFDLSLLKFAWLSQS) are Periplasmic-facing. The chain crosses the membrane as a helical span at residues 102–122 (FGGVLFGFAIPMFAAFVANSI). The Cytoplasmic portion of the chain corresponds to 123–126 (GGKL). A helical transmembrane segment spans residues 127–147 (AFPAGFIGGLMSTQPTQLLNF). At 148-157 (DPSTMQWATS) the chain is on the periplasmic side. The helical transmembrane segment at 158 to 178 (SPVPSTFIGALIISIVAGYLV) threads the bilayer. Residues 179–197 (KWMNQKIQLPDFLLAFKTT) are Cytoplasmic-facing. Residues 198–218 (FLLPILSAIFVMLAMYYVITP) traverse the membrane as a helical segment. The Periplasmic segment spans residues 219-237 (FGGWINGGIRTVLTAAGEK). A helical transmembrane segment spans residues 238–258 (GALMYAMGIAAATAIDLGGPI). Residues 259-276 (NKAAGFVAFSFTTDHVLP) are Cytoplasmic-facing. Residues 277-297 (VTARSIAIVIPPIGLGLATII) form a helical membrane-spanning segment. At 298–318 (DRRLTGKRLFNAQLYPQGKTA) the chain is on the periplasmic side. The chain crosses the membrane as a helical span at residues 319–339 (MFLAFMGISEGAIPFALESPI). At 340–341 (TA) the chain is on the cytoplasmic side. Residues 342–362 (IPSYMVGAIVGSTAAVWLGAV) traverse the membrane as a helical segment. Residues 363–378 (QWFPESAIWAWPLVTN) are Periplasmic-facing. A helical transmembrane segment spans residues 379-399 (LGVYMAGIALGAIITALMVVF). Residues 400–415 (LRLMMFRKGKLLIDSL) lie on the Cytoplasmic side of the membrane.

It is found in the cell inner membrane. In terms of biological role, the phosphoenolpyruvate-dependent sugar phosphotransferase system (PTS), a major carbohydrate active -transport system, catalyzes the phosphorylation of incoming sugar substrates concomitant with their translocation across the cell membrane. This is Fructose-like permease IIC component (fryC) from Shigella flexneri.